A 184-amino-acid chain; its full sequence is Large ribosomal subunit protein uL5c (184 aa).

It belongs to the universal ribosomal protein uL5 family. As to quaternary structure, part of the 50S ribosomal subunit; contacts the 5S rRNA.

It localises to the plastid. It is found in the chloroplast. Binds 5S rRNA, forms part of the central protuberance of the 50S subunit. This Nephroselmis olivacea (Green alga) protein is Large ribosomal subunit protein uL5c (rpl5).